Reading from the N-terminus, the 532-residue chain is uncharacterized protein (532 aa).

The next 6 membrane-spanning stretches (helical) occupy residues 7–26, 30–52, 59–77, 87–109, 116–134, and 139–161; these read HSSY…LGRI, GLSL…GVII, FGLV…PGFF, LIII…KYAF, VVGL…AVAI, and SPLA…ILFV. RCK C-terminal domains are found at residues 179 to 262 and 263 to 346; these read LEIE…LVGE and REEG…LLGN. 4 helical membrane passes run 356–378, 388–410, 446–468, and 509–531; these read FFPI…SFPG, GGVL…LWSM, GLLL…AFVG, and YATV…ATVV.

It belongs to the AAE transporter (TC 2.A.81) family.

It localises to the cell membrane. This is an uncharacterized protein from Bacteroides fragilis (strain YCH46).